A 128-amino-acid polypeptide reads, in one-letter code: Sulfurtransferase TusD (128 aa).

The active-site Cysteine persulfide intermediate is cysteine 78.

The protein belongs to the DsrE/TusD family. In terms of assembly, heterohexamer, formed by a dimer of trimers. The hexameric TusBCD complex contains 2 copies each of TusB, TusC and TusD. The TusBCD complex interacts with TusE.

The protein resides in the cytoplasm. In terms of biological role, part of a sulfur-relay system required for 2-thiolation of 5-methylaminomethyl-2-thiouridine (mnm(5)s(2)U) at tRNA wobble positions. Accepts sulfur from TusA and transfers it in turn to TusE. The protein is Sulfurtransferase TusD of Klebsiella pneumoniae subsp. pneumoniae (strain ATCC 700721 / MGH 78578).